A 448-amino-acid polypeptide reads, in one-letter code: Ribosomal protein uS12 methylthiotransferase RimO (448 aa).

Positions 7 to 119 (QSLHLISLGC…IDSMIAQRRS (113 aa)) constitute an MTTase N-terminal domain. 6 residues coordinate [4Fe-4S] cluster: cysteine 16, cysteine 50, cysteine 82, cysteine 151, cysteine 155, and cysteine 158. The Radical SAM core domain maps to 137–366 (IGSSFHAYIK…NKIIQSQYKA (230 aa)).

The protein belongs to the methylthiotransferase family. RimO subfamily. The cofactor is [4Fe-4S] cluster.

The protein localises to the cytoplasm. The enzyme catalyses L-aspartate(89)-[ribosomal protein uS12]-hydrogen + (sulfur carrier)-SH + AH2 + 2 S-adenosyl-L-methionine = 3-methylsulfanyl-L-aspartate(89)-[ribosomal protein uS12]-hydrogen + (sulfur carrier)-H + 5'-deoxyadenosine + L-methionine + A + S-adenosyl-L-homocysteine + 2 H(+). Catalyzes the methylthiolation of an aspartic acid residue of ribosomal protein uS12. In Helicobacter hepaticus (strain ATCC 51449 / 3B1), this protein is Ribosomal protein uS12 methylthiotransferase RimO.